Reading from the N-terminus, the 562-residue chain is Dihydroxy-acid dehydratase (562 aa).

Mg(2+) is bound at residue Asp80. Cys121 contributes to the [2Fe-2S] cluster binding site. Mg(2+) contacts are provided by Asp122 and Lys123. Lys123 bears the N6-carboxylysine mark. [2Fe-2S] cluster is bound at residue Cys194. Glu446 is a binding site for Mg(2+). The Proton acceptor role is filled by Ser472.

It belongs to the IlvD/Edd family. Homodimer. [2Fe-2S] cluster serves as cofactor. Requires Mg(2+) as cofactor.

The enzyme catalyses (2R)-2,3-dihydroxy-3-methylbutanoate = 3-methyl-2-oxobutanoate + H2O. The catalysed reaction is (2R,3R)-2,3-dihydroxy-3-methylpentanoate = (S)-3-methyl-2-oxopentanoate + H2O. Its pathway is amino-acid biosynthesis; L-isoleucine biosynthesis; L-isoleucine from 2-oxobutanoate: step 3/4. It participates in amino-acid biosynthesis; L-valine biosynthesis; L-valine from pyruvate: step 3/4. Functionally, functions in the biosynthesis of branched-chain amino acids. Catalyzes the dehydration of (2R,3R)-2,3-dihydroxy-3-methylpentanoate (2,3-dihydroxy-3-methylvalerate) into 2-oxo-3-methylpentanoate (2-oxo-3-methylvalerate) and of (2R)-2,3-dihydroxy-3-methylbutanoate (2,3-dihydroxyisovalerate) into 2-oxo-3-methylbutanoate (2-oxoisovalerate), the penultimate precursor to L-isoleucine and L-valine, respectively. The chain is Dihydroxy-acid dehydratase from Staphylococcus aureus (strain MRSA252).